The chain runs to 200 residues: DNA-binding protein HupB (200 aa).

The segment at 1–90 (MNKAELIDVL…PGAQFKAVVA (90 aa)) is bacterial histone-like domain. N6-acetyllysine occurs at positions 3, 72, 86, 103, 137, 144, and 156. The tract at residues 101–200 (AVKRGVATSA…KVTAAKRGRK (100 aa)) is degenerate repeats region. Positions 179–200 (AKKAAVKKAPAKKVTAAKRGRK) are disordered.

It belongs to the bacterial histone-like protein family. Long actinobacterial subfamily. In terms of assembly, binds to human laminin-2. Post-translationally, may also be methylated and possibly phosphorylated in vivo.

The protein resides in the cytoplasm. The protein localises to the nucleoid. It localises to the secreted. Its subcellular location is the cell wall. It is found in the cell surface. It catalyses the reaction 4 Fe(2+) + O2 + 4 H(+) = 4 Fe(3+) + 2 H2O. In terms of biological role, a nucleoid-associated protein (NAP) that plays a role in local chromosome architecture and chromosome compactation. Required for biofilm formation, stress survival and possibly in cell wall assembly, probably influences transcription. RNase E and HupB jointly contribute to cellular adaptation to changing growth conditions and survival during antibiotic treatment and in the host. Binds Fe(3+) but not Fe(2+). Has ferroxidase activity, converts Fe(2+) into Fe(3+) and in the presence of H(2)O(2) prevents the generation of hydroxyl radicals (the Fenton reaction). Protects DNA from damage in the presence of FeSO(4) and H(2)O(2). May function in iron storage. Its function is as follows. May be involved in entry into human Schwann cells. The polypeptide is DNA-binding protein HupB (Mycobacterium leprae (strain TN)).